Consider the following 393-residue polypeptide: MLRYLTAGESHGPQLTAIIEGLPAGLKISDESINCDLARRQCGYGRGGRMKIERDEAQILSGVRWGETIGSPVTLCIVNRDWINWQEKMSPNARHRDEKIRVTRSRPGHADLPGAMKYDHRDVRNILERSSARETAVRVAVGAVAKAFLASFGIEVNGFVSEVGGIRAERRSLQLERMKELSAASELFTYDAEAEERMKAFIDGAREAGDTVGGVVEIIASGLPVGLGSHVQWDRKLDARLAMAVMSIQAIKGVEIGLGFDAARRPGSQVHDEIYYDSTRISRGELSGFYRKSNNAGGIEGGITNGEDIVIRAAMKPIPTLYRPLRSVDMQTKEPFEATVERSDVCAVPAAAVVAEAVVALELANAMLEKFGGDSLGEVRRNYEGYLEYVRAF.

Residues arginine 40 and arginine 46 each contribute to the NADP(+) site. Residues 129–131 (RSS), 249–250 (QA), glycine 301, 316–320 (KPIPT), and arginine 342 each bind FMN.

It belongs to the chorismate synthase family. In terms of assembly, homotetramer. The cofactor is FMNH2.

The enzyme catalyses 5-O-(1-carboxyvinyl)-3-phosphoshikimate = chorismate + phosphate. The protein operates within metabolic intermediate biosynthesis; chorismate biosynthesis; chorismate from D-erythrose 4-phosphate and phosphoenolpyruvate: step 7/7. Functionally, catalyzes the anti-1,4-elimination of the C-3 phosphate and the C-6 proR hydrogen from 5-enolpyruvylshikimate-3-phosphate (EPSP) to yield chorismate, which is the branch point compound that serves as the starting substrate for the three terminal pathways of aromatic amino acid biosynthesis. This reaction introduces a second double bond into the aromatic ring system. The polypeptide is Chorismate synthase (Geobacter sulfurreducens (strain ATCC 51573 / DSM 12127 / PCA)).